We begin with the raw amino-acid sequence, 152 residues long: Large ribosomal subunit protein uL15 (152 aa).

The tract at residues 18–37 is disordered; sequence RVARGIGSGKGKTAGRGVKG. The span at 23-35 shows a compositional bias: gly residues; the sequence is IGSGKGKTAGRGV.

Belongs to the universal ribosomal protein uL15 family. As to quaternary structure, part of the 50S ribosomal subunit.

In terms of biological role, binds to the 23S rRNA. This is Large ribosomal subunit protein uL15 from Rickettsia bellii (strain OSU 85-389).